The primary structure comprises 282 residues: 1,4-dihydroxy-6-naphtoate synthase (282 aa).

Substrate is bound by residues 57–59 and 109–110; these read KVS and TA. His153 acts as the Proton acceptor in catalysis.

It belongs to the MqnA/MqnD family. MqnD subfamily.

It carries out the reaction cyclic dehypoxanthinylfutalosinate = 1,4-dihydroxy-6-naphthoate + dihydroxyacetone. The protein operates within quinol/quinone metabolism; menaquinone biosynthesis. In terms of biological role, catalyzes the conversion of cyclic dehypoxanthine futalosine (cyclic DHFL) into 1,4-dihydroxy-6-naphthoate, a step in the biosynthesis of menaquinone (MK, vitamin K2). The sequence is that of 1,4-dihydroxy-6-naphtoate synthase from Streptomyces coelicolor (strain ATCC BAA-471 / A3(2) / M145).